The primary structure comprises 112 residues: Large ribosomal subunit protein eL22 (112 aa).

This sequence belongs to the eukaryotic ribosomal protein eL22 family. Component of the large ribosomal subunit.

The protein localises to the cytoplasm. This Encephalitozoon cuniculi (strain GB-M1) (Microsporidian parasite) protein is Large ribosomal subunit protein eL22 (RPL22).